The following is a 637-amino-acid chain: Nucleoside triphosphatase I (637 aa).

Residues 43 to 205 enclose the Helicase ATP-binding domain; that stretch reads FLGLNSMNSI…QMLVNLLRPG (163 aa). 56–63 serves as a coordination point for ATP; that stretch reads QETGVGKT. Positions 142 to 145 match the DEXH box motif; the sequence is DECH. A Helicase C-terminal domain is found at 358–537; that stretch reads ELYNYLYEHS…QLYKVFKHSS (180 aa). Positions 459-526 are binding to the cap-specific mRNA (nucleoside-2'-O-)-methyltransferase; sequence DIFILDMTWN…DIIQSKSKEF (68 aa).

It belongs to the helicase family. NPH I subfamily. Monomer. Interacts (via C-terminus) with RAP94 (via N-terminus). Interacts with the cap-specific mRNA (nucleoside-2'-O-)-methyltransferase.

Its subcellular location is the virion. It catalyses the reaction a ribonucleoside 5'-triphosphate + H2O = a ribonucleoside 5'-diphosphate + phosphate + H(+). Its function is as follows. DNA-dependent ATPase required for providing the needed energy to achieve the termination of early transcripts. Acts in concert with the RAP94 subunit of the virion RNA polymerase and the capping enzyme/VTF to catalyze release of UUUUUNU-containing nascent RNA from the elongation complex. NPH-I must bind ssDNA in order to exhibit ATPase activity. The polypeptide is Nucleoside triphosphatase I (NPH1) (Vertebrata (FPV)).